The chain runs to 296 residues: Ribosomal RNA small subunit methyltransferase A (296 aa).

S-adenosyl-L-methionine is bound by residues Asn30, Leu32, Gly57, Glu78, Asp103, and Asn128.

Belongs to the class I-like SAM-binding methyltransferase superfamily. rRNA adenine N(6)-methyltransferase family. RsmA subfamily.

The protein resides in the cytoplasm. It catalyses the reaction adenosine(1518)/adenosine(1519) in 16S rRNA + 4 S-adenosyl-L-methionine = N(6)-dimethyladenosine(1518)/N(6)-dimethyladenosine(1519) in 16S rRNA + 4 S-adenosyl-L-homocysteine + 4 H(+). In terms of biological role, specifically dimethylates two adjacent adenosines (A1518 and A1519) in the loop of a conserved hairpin near the 3'-end of 16S rRNA in the 30S particle. May play a critical role in biogenesis of 30S subunits. The chain is Ribosomal RNA small subunit methyltransferase A from Staphylococcus carnosus (strain TM300).